We begin with the raw amino-acid sequence, 457 residues long: MYNCAIILAAGKGKRMKSSMPKVVHKVCGKEMVNHVIDNVRKANIKDVNLVIGKGSETVKEHTKDRNVTYSMQEEQLGTGHAVICAEEFLKDKKGTVAIFTGDAPLITNETIQQLFEFHNSGKYAATLISSTVQDPTGYGRIIREASGEVKKIVEHKDCNEEELKVNEINSGMYCFDIEVLLNSLKNLNNDNSQGEYYLTDVIEITKKSGDKVGAIVVPYEEIMGVNSRVQLSEAEIVMRKRINHKHMVNGVTFIDCESTYIDVDVEIGNDTIIYPGCVIQGNTTIKEGCTLYSNSRICNSVIGSGVIVENSVILESHVGEGTTVGPFAYIRPETKIGKSARIGDFVEIKKSTIGDNTKVSHLTYIGDAEVGSKCNFGCGTVVVNYDGQRKQKTIIGNNAFIGCNTNLISPVKVNDNTYIAAGSTITNEVPEGSLAIARSKQINKEGWLDKKGLLKK.

The segment at 1–229 (MYNCAIILAA…YEEIMGVNSR (229 aa)) is pyrophosphorylase. Residues 8–11 (LAAG), lysine 22, glutamine 73, and 78–79 (GT) each bind UDP-N-acetyl-alpha-D-glucosamine. Aspartate 103 lines the Mg(2+) pocket. 4 residues coordinate UDP-N-acetyl-alpha-D-glucosamine: glycine 140, glutamate 155, asparagine 170, and asparagine 227. A Mg(2+)-binding site is contributed by asparagine 227. The segment at 230 to 250 (VQLSEAEIVMRKRINHKHMVN) is linker. The segment at 251–457 (GVTFIDCEST…WLDKKGLLKK (207 aa)) is N-acetyltransferase. UDP-N-acetyl-alpha-D-glucosamine is bound by residues arginine 332 and lysine 350. Histidine 362 acts as the Proton acceptor in catalysis. UDP-N-acetyl-alpha-D-glucosamine is bound by residues tyrosine 365 and asparagine 376. Residues 385–386 (NY), alanine 422, and arginine 439 each bind acetyl-CoA.

It in the N-terminal section; belongs to the N-acetylglucosamine-1-phosphate uridyltransferase family. This sequence in the C-terminal section; belongs to the transferase hexapeptide repeat family. In terms of assembly, homotrimer. Mg(2+) is required as a cofactor.

The protein resides in the cytoplasm. The enzyme catalyses alpha-D-glucosamine 1-phosphate + acetyl-CoA = N-acetyl-alpha-D-glucosamine 1-phosphate + CoA + H(+). The catalysed reaction is N-acetyl-alpha-D-glucosamine 1-phosphate + UTP + H(+) = UDP-N-acetyl-alpha-D-glucosamine + diphosphate. It functions in the pathway nucleotide-sugar biosynthesis; UDP-N-acetyl-alpha-D-glucosamine biosynthesis; N-acetyl-alpha-D-glucosamine 1-phosphate from alpha-D-glucosamine 6-phosphate (route II): step 2/2. Its pathway is nucleotide-sugar biosynthesis; UDP-N-acetyl-alpha-D-glucosamine biosynthesis; UDP-N-acetyl-alpha-D-glucosamine from N-acetyl-alpha-D-glucosamine 1-phosphate: step 1/1. The protein operates within bacterial outer membrane biogenesis; LPS lipid A biosynthesis. In terms of biological role, catalyzes the last two sequential reactions in the de novo biosynthetic pathway for UDP-N-acetylglucosamine (UDP-GlcNAc). The C-terminal domain catalyzes the transfer of acetyl group from acetyl coenzyme A to glucosamine-1-phosphate (GlcN-1-P) to produce N-acetylglucosamine-1-phosphate (GlcNAc-1-P), which is converted into UDP-GlcNAc by the transfer of uridine 5-monophosphate (from uridine 5-triphosphate), a reaction catalyzed by the N-terminal domain. The polypeptide is Bifunctional protein GlmU (Clostridium botulinum (strain Langeland / NCTC 10281 / Type F)).